Reading from the N-terminus, the 72-residue chain is Cytochrome c oxidase subunit 2 (72 aa).

Residues 1–14 lie on the Mitochondrial intermembrane side of the membrane; the sequence is MAHPSQLGFQDAAS. Residues 15 to 45 form a helical membrane-spanning segment; it reads PVMEELLHFHDHALMIVFLISTLVLYIIVAM. The Mitochondrial matrix portion of the chain corresponds to 46–72; that stretch reads VSTKLTNKYXLDSQEIEVIWTXLPAVI.

It belongs to the cytochrome c oxidase subunit 2 family. Component of the cytochrome c oxidase (complex IV, CIV), a multisubunit enzyme composed of 14 subunits. The complex is composed of a catalytic core of 3 subunits MT-CO1, MT-CO2 and MT-CO3, encoded in the mitochondrial DNA, and 11 supernumerary subunits COX4I, COX5A, COX5B, COX6A, COX6B, COX6C, COX7A, COX7B, COX7C, COX8 and NDUFA4, which are encoded in the nuclear genome. The complex exists as a monomer or a dimer and forms supercomplexes (SCs) in the inner mitochondrial membrane with NADH-ubiquinone oxidoreductase (complex I, CI) and ubiquinol-cytochrome c oxidoreductase (cytochrome b-c1 complex, complex III, CIII), resulting in different assemblies (supercomplex SCI(1)III(2)IV(1) and megacomplex MCI(2)III(2)IV(2)). Found in a complex with TMEM177, COA6, COX18, COX20, SCO1 and SCO2. Interacts with TMEM177 in a COX20-dependent manner. Interacts with COX20. Interacts with COX16. Requires Cu cation as cofactor.

The protein localises to the mitochondrion inner membrane. The enzyme catalyses 4 Fe(II)-[cytochrome c] + O2 + 8 H(+)(in) = 4 Fe(III)-[cytochrome c] + 2 H2O + 4 H(+)(out). Its function is as follows. Component of the cytochrome c oxidase, the last enzyme in the mitochondrial electron transport chain which drives oxidative phosphorylation. The respiratory chain contains 3 multisubunit complexes succinate dehydrogenase (complex II, CII), ubiquinol-cytochrome c oxidoreductase (cytochrome b-c1 complex, complex III, CIII) and cytochrome c oxidase (complex IV, CIV), that cooperate to transfer electrons derived from NADH and succinate to molecular oxygen, creating an electrochemical gradient over the inner membrane that drives transmembrane transport and the ATP synthase. Cytochrome c oxidase is the component of the respiratory chain that catalyzes the reduction of oxygen to water. Electrons originating from reduced cytochrome c in the intermembrane space (IMS) are transferred via the dinuclear copper A center (CU(A)) of subunit 2 and heme A of subunit 1 to the active site in subunit 1, a binuclear center (BNC) formed by heme A3 and copper B (CU(B)). The BNC reduces molecular oxygen to 2 water molecules using 4 electrons from cytochrome c in the IMS and 4 protons from the mitochondrial matrix. In Gomphosus varius (Bird wrasse), this protein is Cytochrome c oxidase subunit 2 (mt-co2).